Reading from the N-terminus, the 209-residue chain is ATP synthase subunit O, mitochondrial (209 aa).

Belongs to the ATPase delta chain family. As to quaternary structure, F-type ATPases have 2 components, CF(1) - the catalytic core - and CF(0) - the membrane proton channel. CF(1) has five subunits: alpha(3), beta(3), gamma(1), delta(1), epsilon(1). CF(0) has three main subunits: a, b and c.

The protein localises to the mitochondrion. It localises to the mitochondrion inner membrane. Its function is as follows. Mitochondrial membrane ATP synthase (F(1)F(0) ATP synthase or Complex V) produces ATP from ADP in the presence of a proton gradient across the membrane which is generated by electron transport complexes of the respiratory chain. F-type ATPases consist of two structural domains, F(1) - containing the extramembraneous catalytic core and F(0) - containing the membrane proton channel, linked together by a central stalk and a peripheral stalk. During catalysis, ATP synthesis in the catalytic domain of F(1) is coupled via a rotary mechanism of the central stalk subunits to proton translocation. Part of the complex F(0) domain and the peripheric stalk, which acts as a stator to hold the catalytic alpha(3)beta(3) subcomplex and subunit a/ATP6 static relative to the rotary elements. This Drosophila melanogaster (Fruit fly) protein is ATP synthase subunit O, mitochondrial.